We begin with the raw amino-acid sequence, 239 residues long: 1-(5-phosphoribosyl)-5-[(5-phosphoribosylamino)methylideneamino] imidazole-4-carboxamide isomerase (239 aa).

The active-site Proton acceptor is D8. Catalysis depends on D129, which acts as the Proton donor.

Belongs to the HisA/HisF family.

The protein localises to the cytoplasm. The catalysed reaction is 1-(5-phospho-beta-D-ribosyl)-5-[(5-phospho-beta-D-ribosylamino)methylideneamino]imidazole-4-carboxamide = 5-[(5-phospho-1-deoxy-D-ribulos-1-ylimino)methylamino]-1-(5-phospho-beta-D-ribosyl)imidazole-4-carboxamide. It functions in the pathway amino-acid biosynthesis; L-histidine biosynthesis; L-histidine from 5-phospho-alpha-D-ribose 1-diphosphate: step 4/9. In Bacillus cytotoxicus (strain DSM 22905 / CIP 110041 / 391-98 / NVH 391-98), this protein is 1-(5-phosphoribosyl)-5-[(5-phosphoribosylamino)methylideneamino] imidazole-4-carboxamide isomerase.